The following is a 210-amino-acid chain: Protein-L-isoaspartate O-methyltransferase (210 aa).

The active site involves Ser54.

The protein belongs to the methyltransferase superfamily. L-isoaspartyl/D-aspartyl protein methyltransferase family.

It is found in the cytoplasm. It carries out the reaction [protein]-L-isoaspartate + S-adenosyl-L-methionine = [protein]-L-isoaspartate alpha-methyl ester + S-adenosyl-L-homocysteine. Functionally, catalyzes the methyl esterification of L-isoaspartyl residues in peptides and proteins that result from spontaneous decomposition of normal L-aspartyl and L-asparaginyl residues. It plays a role in the repair and/or degradation of damaged proteins. The protein is Protein-L-isoaspartate O-methyltransferase of Methanothrix thermoacetophila (strain DSM 6194 / JCM 14653 / NBRC 101360 / PT) (Methanosaeta thermophila).